Here is a 388-residue protein sequence, read N- to C-terminus: L-lactate dehydrogenase (388 aa).

The 380-residue stretch at Met1–Glu380 folds into the FMN hydroxy acid dehydrogenase domain. Tyr24 is a substrate binding site. The FMN site is built by Ser106 and Gln127. Residue Tyr129 coordinates substrate. An FMN-binding site is contributed by Thr155. Arg164 contacts substrate. An FMN-binding site is contributed by Lys251. Catalysis depends on His275, which acts as the Proton acceptor. Position 278 (Arg278) interacts with substrate. Asp306–Arg330 provides a ligand contact to FMN.

This sequence belongs to the FMN-dependent alpha-hydroxy acid dehydrogenase family. The cofactor is FMN.

The protein localises to the cell inner membrane. The enzyme catalyses (S)-lactate + A = pyruvate + AH2. Catalyzes the conversion of L-lactate to pyruvate. Is coupled to the respiratory chain. In Xanthobacter autotrophicus (strain ATCC BAA-1158 / Py2), this protein is L-lactate dehydrogenase.